Reading from the N-terminus, the 245-residue chain is 1-(5-phosphoribosyl)-5-[(5-phosphoribosylamino)methylideneamino] imidazole-4-carboxamide isomerase (245 aa).

Residue Asp7 is the Proton acceptor of the active site. Residue Asp129 is the Proton donor of the active site.

This sequence belongs to the HisA/HisF family.

The protein localises to the cytoplasm. The enzyme catalyses 1-(5-phospho-beta-D-ribosyl)-5-[(5-phospho-beta-D-ribosylamino)methylideneamino]imidazole-4-carboxamide = 5-[(5-phospho-1-deoxy-D-ribulos-1-ylimino)methylamino]-1-(5-phospho-beta-D-ribosyl)imidazole-4-carboxamide. The protein operates within amino-acid biosynthesis; L-histidine biosynthesis; L-histidine from 5-phospho-alpha-D-ribose 1-diphosphate: step 4/9. This is 1-(5-phosphoribosyl)-5-[(5-phosphoribosylamino)methylideneamino] imidazole-4-carboxamide isomerase from Salmonella dublin (strain CT_02021853).